Here is an 803-residue protein sequence, read N- to C-terminus: Integrin beta-1 (803 aa).

Positions 1–24 (MAETNLTLLTWAGILCCLIWSGSA) are cleaved as a signal peptide. Gln-25 carries the blocked amino end (Gln) modification. The Extracellular portion of the chain corresponds to 25-733 (QQGGSDCIKA…ETPECPSGPD (709 aa)). Residues 30-80 (DCIKANAKSCGECIQAGPNCGWCKKTDFLQEGEPTSARCDDLAALKSKGCP) enclose the PSI domain. Intrachain disulfides connect Cys-31–Cys-49, Cys-39–Cys-469, Cys-42–Cys-68, Cys-52–Cys-79, Cys-211–Cys-217, Cys-265–Cys-305, Cys-405–Cys-419, Cys-439–Cys-467, Cys-471–Cys-491, Cys-482–Cys-494, Cys-496–Cys-505, Cys-507–Cys-538, Cys-521–Cys-536, Cys-530–Cys-541, Cys-543–Cys-558, Cys-560–Cys-581, Cys-565–Cys-579, Cys-573–Cys-584, Cys-586–Cys-595, Cys-597–Cys-620, Cys-604–Cys-618, and Cys-612–Cys-623. A VWFA domain is found at 144-382 (DYPIDLYYLM…QLIIDAYNSL (239 aa)). 2 residues coordinate Mg(2+): Ser-156 and Ser-158. 4 residues coordinate Ca(2+): Ser-158, Asp-161, Asp-162, and Glu-193. Residues 211–217 (CTGDQNC) are CX3CL1-binding. N-linked (GlcNAc...) asparagine glycosylation is present at Asn-216. Positions 248, 250, 252, and 253 each coordinate Ca(2+). Glu-253 lines the Mg(2+) pocket. Asn-273 carries an N-linked (GlcNAc...) asparagine glycan. The tract at residues 299–318 (LPNDGKCHLENNMYTMSHYY) is CX3CL1-binding. N-linked (GlcNAc...) asparagine glycans are attached at residues Asn-367, Asn-410, Asn-421, Asn-433, Asn-445, and Asn-486. The interval 387-470 (ILENSKLPKE…IHLQFICDCL (84 aa)) is interaction with TMEM182. 4 I-EGF domains span residues 471–506 (CQSEGEPNSPACHDGNGTFECGACRCNEGRIGRLCE), 507–559 (CSTD…KYCE), 560–596 (CDNFNCDRSNGLICGGNGICKCRVCECFPNFTGSACD), and 597–636 (CSLDTTPCMAGNGQICNGRGTCECGTCNCTDPKFQGPTCE). N-linked (GlcNAc...) asparagine glycosylation is present at Asn-525. A glycan (N-linked (GlcNAc...) asparagine) is linked at Asn-589. A glycan (N-linked (GlcNAc...) asparagine) is linked at Asn-624. 6 disulfides stabilise this stretch: Cys-625/Cys-635, Cys-638/Cys-641, Cys-645/Cys-696, Cys-651/Cys-670, Cys-654/Cys-666, and Cys-704/Cys-728. An N-linked (GlcNAc...) asparagine glycan is attached at Asn-674. Residues 734–756 (IIPIVAGVVAGIVLIGLALLLIW) traverse the membrane as a helical segment. Over 757–803 (KLLMIIHDRREFAKFEKEKMNAKWDTGENPIYKSAVTTVVNPKYEGK) the chain is Cytoplasmic. Tyr-788 is subject to Phosphotyrosine; by Tyr-kinases.

Belongs to the integrin beta chain family. As to quaternary structure, heterodimer of an alpha and a beta subunit. Beta-1 associates with either alpha-1, alpha-2, alpha-3, alpha-4, alpha-5, alpha-6, alpha-7, alpha-8, alpha-9, alpha-10, alpha-11 or alpha-V. Interacts with TMEM182 and LAMB1. As to expression, expressed on surface of embryonic fibroblasts (at protein level).

Its subcellular location is the cell membrane. The protein localises to the cell projection. It localises to the invadopodium membrane. It is found in the ruffle membrane. The protein resides in the melanosome. Its subcellular location is the lamellipodium. The protein localises to the ruffle. It localises to the cell junction. It is found in the focal adhesion. Its function is as follows. Integrins alpha-1/beta-1, alpha-2/beta-1, alpha-10/beta-1 and alpha-11/beta-1 are receptors for collagen. Integrins alpha-1/beta-1 and alpha-2/beta-1 recognize the proline-hydroxylated sequence G-F-P-G-E-R in collagen. Integrins alpha-2/beta-1, alpha-3/beta-1, alpha-4/beta-1, alpha-5/beta-1, alpha-8/beta-1, alpha-10/beta-1, alpha-11/beta-1 and alpha-V/beta-1 are receptors for fibronectin. Alpha-4/beta-1 recognizes one or more domains within the alternatively spliced CS-1 and CS-5 regions of fibronectin. Integrin alpha-5/beta-1 is a receptor for fibrinogen. Integrin alpha-1/beta-1, alpha-2/beta-1, alpha-6/beta-1 and alpha-7/beta-1 are receptors for lamimin. Integrin alpha-6/beta-1 (ITGA6:ITGB1) is present in oocytes and is involved in sperm-egg fusion. Integrin alpha-4/beta-1 is a receptor for VCAM1 and recognizes the sequence Q-I-D-S in VCAM1. Integrin alpha-9/beta-1 is a receptor for VCAM1, cytotactin and osteopontin. It recognizes the sequence A-E-I-D-G-I-E-L in cytotactin. Integrin alpha-3/beta-1 is a receptor for epiligrin, thrombospondin and CSPG4. Integrin alpha-3/beta-1 provides a docking site for FAP (seprase) at invadopodia plasma membranes in a collagen-dependent manner and hence may participate in the adhesion, formation of invadopodia and matrix degradation processes, promoting cell invasion. Alpha-3/beta-1 may mediate with LGALS3 the stimulation by CSPG4 of endothelial cells migration. Integrin alpha-V/beta-1 is a receptor for vitronectin. Beta-1 integrins recognize the sequence R-G-D in a wide array of ligands. When associated with alpha-7/beta-1 integrin, regulates cell adhesion and laminin matrix deposition. Involved in promoting endothelial cell motility and angiogenesis. Involved in osteoblast compaction through the fibronectin fibrillogenesis cell-mediated matrix assembly process and the formation of mineralized bone nodules. May be involved in up-regulation of the activity of kinases such as PKC via binding to KRT1. Together with KRT1 and RACK1, serves as a platform for SRC activation or inactivation. ITGA4:ITGB1 binds to fractalkine (CX3CL1) and may act as its coreceptor in CX3CR1-dependent fractalkine signaling. ITGA4:ITGB1 and ITGA5:ITGB1 bind to PLA2G2A via a site (site 2) which is distinct from the classical ligand-binding site (site 1) and this induces integrin conformational changes and enhanced ligand binding to site 1. ITGA5:ITGB1 acts as a receptor for fibrillin-1 (FBN1) and mediates R-G-D-dependent cell adhesion to FBN1. ITGA5:ITGB1 acts as a receptor for fibronectin FN1 and mediates R-G-D-dependent cell adhesion to FN1. ITGA5:ITGB1 is a receptor for IL1B and binding is essential for IL1B signaling. ITGA5:ITGB3 is a receptor for soluble CD40LG and is required for CD40/CD40LG signaling. Plays an important role in myoblast differentiation and fusion during skeletal myogenesis. The chain is Integrin beta-1 (ITGB1) from Gallus gallus (Chicken).